Reading from the N-terminus, the 756-residue chain is MLTSNLGYPRIGENREWKKALESFWANDTTEEQLLATMKELRLNHLRVQQEQEVDLIPVGDFTLYDHVLDMAVMFGIIPKRFLQQGDTPTLSTYFAMARGSKNAQACEMTKWYNTNYHYIVPELHDAAPRLTKNAPLEAYLEAKNELGIDGKPVILGPYSFVKLAKGYEEDKLQETIQSLLPLYIQVIQELVDAGARSIQVDEPSLVTSISAREMALVTRIYEQINEAIADAPLFLQTYFDAVTFYEEVVSLPVKGIGLDFVHGGAKNLEALRTFGFPEDKVLAAGIIDGRNIWISNLRERHELVHQLEQHVAKDRLVLQPSCSLLHVPVTTKREEKLDPTLLGVLAFANEKLTELHTLKQLAAGNEAEVKEALEANDDALAALEKSGWRSGAATSHNLENKKRPQSFNERRPLQEEKWQLPLLPTTTIGSFPQTKDVRRTRSLWRKGELSTVEYERTMKSYIEKWINIQEELGLDVLVHGEFERNDMVEFFGEKLDGFAFTANGWVQSYGSRCVKPPIIYGNVSFTEPMTVAETVYAQSLTDKPVKGMLTGPVTILNWSFVRDDLPLTVIAHQIAEALTHEVTALEEAGIEMIQIDEPAIREGLPLKAEDQQEYLDWAVSAFRASCAHVKATTQIHTHMCYSEFHEMIEAIDDLDADVISIETSRSHGEMISAFEKTTYEKGIGLGVYDIHSPRVPSEEEMLNVIRRALTVLPASLFWVNPDCGLKTRAEKETVAALKNMVAAARAAREELKTKA.

5-methyltetrahydropteroyltri-L-glutamate-binding positions include 15 to 18 (REWK) and Lys111. Positions 392-411 (GAATSHNLENKKRPQSFNER) are disordered. Basic and acidic residues predominate over residues 399 to 411 (LENKKRPQSFNER). Residues 429-431 (IGS) and Glu482 contribute to the L-homocysteine site. Residues 429 to 431 (IGS) and Glu482 each bind L-methionine. Residues 513–514 (RC) and Trp559 each bind 5-methyltetrahydropteroyltri-L-glutamate. Asp597 contributes to the L-homocysteine binding site. An L-methionine-binding site is contributed by Asp597. Glu603 is a binding site for 5-methyltetrahydropteroyltri-L-glutamate. Zn(2+) contacts are provided by His639, Cys641, and Glu663. His692 (proton donor) is an active-site residue. Residue Cys724 participates in Zn(2+) binding.

It belongs to the vitamin-B12 independent methionine synthase family. Zn(2+) is required as a cofactor.

It carries out the reaction 5-methyltetrahydropteroyltri-L-glutamate + L-homocysteine = tetrahydropteroyltri-L-glutamate + L-methionine. The protein operates within amino-acid biosynthesis; L-methionine biosynthesis via de novo pathway; L-methionine from L-homocysteine (MetE route): step 1/1. Its function is as follows. Catalyzes the transfer of a methyl group from 5-methyltetrahydrofolate to homocysteine resulting in methionine formation. This is 5-methyltetrahydropteroyltriglutamate--homocysteine methyltransferase from Halalkalibacterium halodurans (strain ATCC BAA-125 / DSM 18197 / FERM 7344 / JCM 9153 / C-125) (Bacillus halodurans).